The primary structure comprises 65 residues: Ferredoxin-like protein in vnf region (65 aa).

2 consecutive 4Fe-4S ferredoxin-type domains span residues 2–30 (AMAI…FRDD) and 32–65 (YAIE…PLDD). 8 residues coordinate [4Fe-4S] cluster: cysteine 10, cysteine 13, cysteine 16, cysteine 20, cysteine 39, cysteine 42, cysteine 50, and cysteine 54.

Requires [4Fe-4S] cluster as cofactor.

The protein is Ferredoxin-like protein in vnf region of Azotobacter vinelandii.